Reading from the N-terminus, the 230-residue chain is Cytidylate kinase (230 aa).

ATP is bound at residue 12 to 20; it reads GPSGAGKGT.

It belongs to the cytidylate kinase family. Type 1 subfamily.

Its subcellular location is the cytoplasm. It catalyses the reaction CMP + ATP = CDP + ADP. The catalysed reaction is dCMP + ATP = dCDP + ADP. The polypeptide is Cytidylate kinase (Aeromonas hydrophila subsp. hydrophila (strain ATCC 7966 / DSM 30187 / BCRC 13018 / CCUG 14551 / JCM 1027 / KCTC 2358 / NCIMB 9240 / NCTC 8049)).